A 229-amino-acid chain; its full sequence is Potassium/proton antiporter CemA (229 aa).

3 helical membrane passes run 7 to 27, 107 to 127, and 189 to 209; these read FTPLFYLASIVFLPWWISFSV, ILHFSTNIICFIILSGYSILG, and IISGLVSTFPVILDTIFKYWI.

The protein belongs to the CemA family.

It localises to the plastid. It is found in the chloroplast inner membrane. The catalysed reaction is K(+)(in) + H(+)(out) = K(+)(out) + H(+)(in). In terms of biological role, contributes to K(+)/H(+) antiport activity by supporting proton efflux to control proton extrusion and homeostasis in chloroplasts in a light-dependent manner to modulate photosynthesis. Prevents excessive induction of non-photochemical quenching (NPQ) under continuous-light conditions. Indirectly promotes efficient inorganic carbon uptake into chloroplasts. The chain is Potassium/proton antiporter CemA from Nicotiana tomentosiformis (Tobacco).